Consider the following 197-residue polypeptide: Peptidyl-tRNA hydrolase (197 aa).

Tyrosine 18 contributes to the tRNA binding site. Residue histidine 23 is the Proton acceptor of the active site. Residues tyrosine 68, asparagine 70, and asparagine 116 each coordinate tRNA.

This sequence belongs to the PTH family. As to quaternary structure, monomer.

Its subcellular location is the cytoplasm. The enzyme catalyses an N-acyl-L-alpha-aminoacyl-tRNA + H2O = an N-acyl-L-amino acid + a tRNA + H(+). Functionally, hydrolyzes ribosome-free peptidyl-tRNAs (with 1 or more amino acids incorporated), which drop off the ribosome during protein synthesis, or as a result of ribosome stalling. Catalyzes the release of premature peptidyl moieties from peptidyl-tRNA molecules trapped in stalled 50S ribosomal subunits, and thus maintains levels of free tRNAs and 50S ribosomes. The protein is Peptidyl-tRNA hydrolase of Desulfotalea psychrophila (strain LSv54 / DSM 12343).